The primary structure comprises 1024 residues: Beta-galactosidase (1024 aa).

The substrate site is built by N103 and D202. Residue D202 participates in Na(+) binding. Mg(2+) contacts are provided by E417, H419, and E462. Substrate is bound by residues E462 and 538-541 (EYAH). E462 functions as the Proton donor in the catalytic mechanism. The Nucleophile role is filled by E538. N598 contributes to the Mg(2+) binding site. Residues F602 and N605 each coordinate Na(+). Substrate is bound by residues N605 and W1000.

The protein belongs to the glycosyl hydrolase 2 family. As to quaternary structure, homotetramer. It depends on Mg(2+) as a cofactor. Na(+) serves as cofactor.

It carries out the reaction Hydrolysis of terminal non-reducing beta-D-galactose residues in beta-D-galactosides.. The polypeptide is Beta-galactosidase (Escherichia coli O157:H7).